We begin with the raw amino-acid sequence, 161 residues long: NAD(P)H-quinone oxidoreductase subunit I, chloroplastic (161 aa).

4Fe-4S ferredoxin-type domains lie at 55–84 (GRIH…VDWK) and 95–124 (LNYS…MTEE). Residues Cys-64, Cys-67, Cys-70, Cys-74, Cys-104, Cys-107, Cys-110, and Cys-114 each contribute to the [4Fe-4S] cluster site.

The protein belongs to the complex I 23 kDa subunit family. NDH is composed of at least 16 different subunits, 5 of which are encoded in the nucleus. [4Fe-4S] cluster is required as a cofactor.

The protein resides in the plastid. The protein localises to the chloroplast thylakoid membrane. It carries out the reaction a plastoquinone + NADH + (n+1) H(+)(in) = a plastoquinol + NAD(+) + n H(+)(out). It catalyses the reaction a plastoquinone + NADPH + (n+1) H(+)(in) = a plastoquinol + NADP(+) + n H(+)(out). Its function is as follows. NDH shuttles electrons from NAD(P)H:plastoquinone, via FMN and iron-sulfur (Fe-S) centers, to quinones in the photosynthetic chain and possibly in a chloroplast respiratory chain. The immediate electron acceptor for the enzyme in this species is believed to be plastoquinone. Couples the redox reaction to proton translocation, and thus conserves the redox energy in a proton gradient. The polypeptide is NAD(P)H-quinone oxidoreductase subunit I, chloroplastic (Phaseolus vulgaris (Kidney bean)).